A 199-amino-acid polypeptide reads, in one-letter code: NAD(P)H quinone oxidoreductase PST3 (199 aa).

One can recognise a Flavodoxin-like domain in the interval 5–193; the sequence is VAIIIYSLYH…EIAFIQGKSF (189 aa). Residues 11–15 and 111–165 contribute to the FMN site; these read SLYHH and IFVS…SPYG.

The protein belongs to the WrbA family. Requires FMN as cofactor.

It localises to the cell membrane. The catalysed reaction is a quinone + NADH + H(+) = a quinol + NAD(+). The enzyme catalyses a quinone + NADPH + H(+) = a quinol + NADP(+). Flavodoxin-like protein (FLP) that plays a role in cell wall integrity, oxidative stress protection and virulence. FLPs act as NAD(P)H quinone oxidoreductases. Reduces ubiquinone (coenzyme Q), enabling it to serve as an antioxidant in the membrane. The polypeptide is NAD(P)H quinone oxidoreductase PST3 (Candida albicans (strain SC5314 / ATCC MYA-2876) (Yeast)).